Here is a 1090-residue protein sequence, read N- to C-terminus: UPF0507 protein SCRG_01893 (1090 aa).

One can recognise a VPS9 domain in the interval 289–436; the sequence is FSVNQLLTDF…FEDFNKNTGN (148 aa).

Belongs to the UPF0507 family.

The chain is UPF0507 protein SCRG_01893 from Saccharomyces cerevisiae (strain RM11-1a) (Baker's yeast).